Reading from the N-terminus, the 59-residue chain is MHFPLPWQLILILLVILVIFGASKLPEVGKGLGEGIRNFKKALSGEEEEKGKEVKKEGE.

A helical membrane pass occupies residues Phe3–Ser23.

It belongs to the TatA/E family. As to quaternary structure, forms a complex with TatC.

It localises to the cell inner membrane. Functionally, part of the twin-arginine translocation (Tat) system that transports large folded proteins containing a characteristic twin-arginine motif in their signal peptide across membranes. TatA could form the protein-conducting channel of the Tat system. The chain is Sec-independent protein translocase protein TatA 1 from Aquifex aeolicus (strain VF5).